The chain runs to 619 residues: P-granule-associated protein deps-1 (619 aa).

The segment at 62–101 is required for prg-1 binding; the sequence is NFDNIEEAKNLERRSKIPLKFGEVILWNESDCDHDKRIIL. Composition is skewed to low complexity over residues 563-592 and 600-619; these read SRATSARTTPAGSSIGSRSSIQSRASAATS and GPSSRRTPSGTPQSSTSSRV. A disordered region spans residues 563–619; it reads SRATSARTTPAGSSIGSRSSIQSRASAATSVSSNRFVGPSSRRTPSGTPQSSTSSRV.

Interacts (via N-terminus) with prg-1; the interaction is direct. May interact with edg-1. In terms of tissue distribution, expressed in germ cells.

The protein localises to the cytoplasmic granule. The protein resides in the cytoplasm. It localises to the perinuclear region. In terms of biological role, component of P-granules which is required for P-granule formation and integrity in adult germ cells. Promotes the accumulation of glh-1 mRNA and localization of pgl-1 to P-granules. Involved in RNA-mediated gene silencing (RNAi) in the germline. In particular, it is required for piwi-interacting RNA (piRNA) gene silencing and positively regulates the formation of secondary 22G-RNAs, which are RNA-dependent RNA polymerase-derived endo-siRNAs, typically 22 nucleotides in length with a 5'guanosine residue. Its role in RNAi may also be through positively regulating the expression of the dsRNA-binding protein rde-4. Plays a role in small RNA-directed transgenerational epigenetic inheritance. This is P-granule-associated protein deps-1 from Caenorhabditis elegans.